A 172-amino-acid polypeptide reads, in one-letter code: Probable chorismate pyruvate-lyase (172 aa).

4 residues coordinate substrate: Met37, Arg79, Leu117, and Glu158.

Belongs to the UbiC family.

Its subcellular location is the cytoplasm. The catalysed reaction is chorismate = 4-hydroxybenzoate + pyruvate. It functions in the pathway cofactor biosynthesis; ubiquinone biosynthesis. In terms of biological role, removes the pyruvyl group from chorismate, with concomitant aromatization of the ring, to provide 4-hydroxybenzoate (4HB) for the ubiquinone pathway. The chain is Probable chorismate pyruvate-lyase from Bartonella quintana (strain Toulouse) (Rochalimaea quintana).